The chain runs to 195 residues: Shikimate kinase (195 aa).

21 to 26 contributes to the ATP binding site; the sequence is GTGKTS. Position 25 (Thr-25) interacts with Mg(2+). Substrate contacts are provided by Asp-43, Arg-67, and Gly-89. Residues 128 to 148 form a disordered region; the sequence is REQRPSFSGKASTEISEETMR. Arg-131 lines the ATP pocket. A compositionally biased stretch (polar residues) spans 132–141; sequence PSFSGKASTE. Residue Arg-158 participates in substrate binding.

Belongs to the shikimate kinase family. In terms of assembly, monomer. Requires Mg(2+) as cofactor.

It is found in the cytoplasm. The enzyme catalyses shikimate + ATP = 3-phosphoshikimate + ADP + H(+). It participates in metabolic intermediate biosynthesis; chorismate biosynthesis; chorismate from D-erythrose 4-phosphate and phosphoenolpyruvate: step 5/7. Functionally, catalyzes the specific phosphorylation of the 3-hydroxyl group of shikimic acid using ATP as a cosubstrate. This is Shikimate kinase from Syntrophus aciditrophicus (strain SB).